Here is a 369-residue protein sequence, read N- to C-terminus: Iron-sulfur cluster assembly SufBD family protein AF_2365 (369 aa).

It belongs to the iron-sulfur cluster assembly SufBD family.

The protein is Iron-sulfur cluster assembly SufBD family protein AF_2365 of Archaeoglobus fulgidus (strain ATCC 49558 / DSM 4304 / JCM 9628 / NBRC 100126 / VC-16).